The primary structure comprises 392 residues: Tryptophan synthase beta chain 1 (392 aa).

Lys85 is modified (N6-(pyridoxal phosphate)lysine).

The protein belongs to the TrpB family. As to quaternary structure, tetramer of two alpha and two beta chains. The cofactor is pyridoxal 5'-phosphate.

The catalysed reaction is (1S,2R)-1-C-(indol-3-yl)glycerol 3-phosphate + L-serine = D-glyceraldehyde 3-phosphate + L-tryptophan + H2O. Its pathway is amino-acid biosynthesis; L-tryptophan biosynthesis; L-tryptophan from chorismate: step 5/5. Functionally, the beta subunit is responsible for the synthesis of L-tryptophan from indole and L-serine. The protein is Tryptophan synthase beta chain 1 (trpB1) of Methanothermobacter thermautotrophicus (strain ATCC 29096 / DSM 1053 / JCM 10044 / NBRC 100330 / Delta H) (Methanobacterium thermoautotrophicum).